Here is a 465-residue protein sequence, read N- to C-terminus: Ribulose bisphosphate carboxylase large chain (465 aa).

K4 is modified (N6,N6,N6-trimethyllysine). N113 and T163 together coordinate substrate. The Proton acceptor role is filled by K165. K167 is a binding site for substrate. Mg(2+) contacts are provided by K191, D193, and E194. K191 carries the N6-carboxylysine modification. The Proton acceptor role is filled by H284. Positions 285, 317, and 369 each coordinate substrate.

This sequence belongs to the RuBisCO large chain family. Type I subfamily. As to quaternary structure, heterohexadecamer of 8 large chains and 8 small chains; disulfide-linked. The disulfide link is formed within the large subunit homodimers. Requires Mg(2+) as cofactor. In terms of processing, the disulfide bond which can form in the large chain dimeric partners within the hexadecamer appears to be associated with oxidative stress and protein turnover.

It is found in the plastid. The protein resides in the chloroplast. The catalysed reaction is 2 (2R)-3-phosphoglycerate + 2 H(+) = D-ribulose 1,5-bisphosphate + CO2 + H2O. The enzyme catalyses D-ribulose 1,5-bisphosphate + O2 = 2-phosphoglycolate + (2R)-3-phosphoglycerate + 2 H(+). Its function is as follows. RuBisCO catalyzes two reactions: the carboxylation of D-ribulose 1,5-bisphosphate, the primary event in carbon dioxide fixation, as well as the oxidative fragmentation of the pentose substrate in the photorespiration process. Both reactions occur simultaneously and in competition at the same active site. This Ephedra tweediana (Vining horsetail) protein is Ribulose bisphosphate carboxylase large chain.